A 480-amino-acid chain; its full sequence is Glutamate--tRNA ligase (480 aa).

The 'HIGH' region motif lies at 9–19; the sequence is PSPTGNLHIGT. Residues 250–254 carry the 'KMSKS' region motif; sequence KLSKR. An ATP-binding site is contributed by K253.

The protein belongs to the class-I aminoacyl-tRNA synthetase family. Glutamate--tRNA ligase type 1 subfamily. As to quaternary structure, monomer.

It localises to the cytoplasm. The enzyme catalyses tRNA(Glu) + L-glutamate + ATP = L-glutamyl-tRNA(Glu) + AMP + diphosphate. In terms of biological role, catalyzes the attachment of glutamate to tRNA(Glu) in a two-step reaction: glutamate is first activated by ATP to form Glu-AMP and then transferred to the acceptor end of tRNA(Glu). In Microcystis aeruginosa (strain NIES-843 / IAM M-2473), this protein is Glutamate--tRNA ligase.